The sequence spans 370 residues: Histidinol-phosphate aminotransferase 2 (370 aa).

Lysine 230 carries the post-translational modification N6-(pyridoxal phosphate)lysine.

It belongs to the class-II pyridoxal-phosphate-dependent aminotransferase family. Histidinol-phosphate aminotransferase subfamily. Homodimer. Pyridoxal 5'-phosphate is required as a cofactor.

It catalyses the reaction L-histidinol phosphate + 2-oxoglutarate = 3-(imidazol-4-yl)-2-oxopropyl phosphate + L-glutamate. It functions in the pathway amino-acid biosynthesis; L-histidine biosynthesis; L-histidine from 5-phospho-alpha-D-ribose 1-diphosphate: step 7/9. This is Histidinol-phosphate aminotransferase 2 from Pseudomonas fluorescens (strain Pf0-1).